A 301-amino-acid chain; its full sequence is Methionyl-tRNA formyltransferase (301 aa).

Residue 109 to 112 (SLLP) coordinates (6S)-5,6,7,8-tetrahydrofolate.

This sequence belongs to the Fmt family.

It carries out the reaction L-methionyl-tRNA(fMet) + (6R)-10-formyltetrahydrofolate = N-formyl-L-methionyl-tRNA(fMet) + (6S)-5,6,7,8-tetrahydrofolate + H(+). Functionally, attaches a formyl group to the free amino group of methionyl-tRNA(fMet). The formyl group appears to play a dual role in the initiator identity of N-formylmethionyl-tRNA by promoting its recognition by IF2 and preventing the misappropriation of this tRNA by the elongation apparatus. This is Methionyl-tRNA formyltransferase from Ruegeria pomeroyi (strain ATCC 700808 / DSM 15171 / DSS-3) (Silicibacter pomeroyi).